The sequence spans 146 residues: Hemoglobin subunit beta-1 (146 aa).

The Globin domain occupies 2–146; the sequence is EWTDAEKSTI…VVAAMGSRYF (145 aa). Heme b contacts are provided by His-63 and His-92.

This sequence belongs to the globin family. In terms of assembly, heterotetramer of two alpha chains and two beta chains. In terms of tissue distribution, red blood cells.

In terms of biological role, involved in oxygen transport from gills to the various peripheral tissues. The sequence is that of Hemoglobin subunit beta-1 (hbb1) from Oncorhynchus mykiss (Rainbow trout).